Here is a 285-residue protein sequence, read N- to C-terminus: Pantothenate synthetase (285 aa).

30 to 37 provides a ligand contact to ATP; it reads MGFLHEGH. The Proton donor role is filled by H37. Q61 is a (R)-pantoate binding site. Position 61 (Q61) interacts with beta-alanine. 147–150 lines the ATP pocket; sequence GQKD. Q153 serves as a coordination point for (R)-pantoate. ATP is bound by residues V176 and 184 to 187; that span reads KSSR.

The protein belongs to the pantothenate synthetase family. Homodimer.

Its subcellular location is the cytoplasm. It catalyses the reaction (R)-pantoate + beta-alanine + ATP = (R)-pantothenate + AMP + diphosphate + H(+). Its pathway is cofactor biosynthesis; (R)-pantothenate biosynthesis; (R)-pantothenate from (R)-pantoate and beta-alanine: step 1/1. In terms of biological role, catalyzes the condensation of pantoate with beta-alanine in an ATP-dependent reaction via a pantoyl-adenylate intermediate. This Listeria monocytogenes serotype 4b (strain F2365) protein is Pantothenate synthetase.